The following is a 372-amino-acid chain: Chaperone protein DnaJ (372 aa).

The J domain occupies 5–70; sequence SYYDILGVSK…KKRQAYDQFG (66 aa). The segment at 140–218 adopts a CR-type zinc-finger fold; that stretch reads GREYKIEIPR…CGGQGLQEKR (79 aa). The Zn(2+) site is built by Cys-153, Cys-156, Cys-170, Cys-173, Cys-192, Cys-195, Cys-206, and Cys-209. CXXCXGXG motif repeat units lie at residues 153 to 160, 170 to 177, 192 to 199, and 206 to 213; these read CVDCNGSG, CPDCGGSG, CPTCRGKG, and CRSCGGQG.

Belongs to the DnaJ family. As to quaternary structure, homodimer. Zn(2+) is required as a cofactor.

The protein localises to the cytoplasm. Its function is as follows. Participates actively in the response to hyperosmotic and heat shock by preventing the aggregation of stress-denatured proteins and by disaggregating proteins, also in an autonomous, DnaK-independent fashion. Unfolded proteins bind initially to DnaJ; upon interaction with the DnaJ-bound protein, DnaK hydrolyzes its bound ATP, resulting in the formation of a stable complex. GrpE releases ADP from DnaK; ATP binding to DnaK triggers the release of the substrate protein, thus completing the reaction cycle. Several rounds of ATP-dependent interactions between DnaJ, DnaK and GrpE are required for fully efficient folding. Also involved, together with DnaK and GrpE, in the DNA replication of plasmids through activation of initiation proteins. The sequence is that of Chaperone protein DnaJ from Leptospira interrogans serogroup Icterohaemorrhagiae serovar copenhageni (strain Fiocruz L1-130).